The chain runs to 365 residues: Chorismate synthase (365 aa).

R47 serves as a coordination point for NADP(+). FMN-binding positions include R124–S126, G287, K302–T306, and R328.

Belongs to the chorismate synthase family. Homotetramer. FMNH2 is required as a cofactor.

It carries out the reaction 5-O-(1-carboxyvinyl)-3-phosphoshikimate = chorismate + phosphate. It functions in the pathway metabolic intermediate biosynthesis; chorismate biosynthesis; chorismate from D-erythrose 4-phosphate and phosphoenolpyruvate: step 7/7. In terms of biological role, catalyzes the anti-1,4-elimination of the C-3 phosphate and the C-6 proR hydrogen from 5-enolpyruvylshikimate-3-phosphate (EPSP) to yield chorismate, which is the branch point compound that serves as the starting substrate for the three terminal pathways of aromatic amino acid biosynthesis. This reaction introduces a second double bond into the aromatic ring system. The sequence is that of Chorismate synthase from Prochlorococcus marinus (strain AS9601).